The chain runs to 247 residues: UPF0309 protein LMOf2365_2617 (247 aa).

In terms of domain architecture, SIS spans 31-214 (VAESIENDGV…ETMVNDNFTP (184 aa)).

It belongs to the UPF0309 family.

This is UPF0309 protein LMOf2365_2617 from Listeria monocytogenes serotype 4b (strain F2365).